The chain runs to 71 residues: Large ribosomal subunit protein uL29 (71 aa).

The segment at 32–51 (GVNKSTGGAPSNPGKISETK) is disordered.

Belongs to the universal ribosomal protein uL29 family.

This chain is Large ribosomal subunit protein uL29, found in Methanococcus maripaludis (strain DSM 14266 / JCM 13030 / NBRC 101832 / S2 / LL).